The sequence spans 359 residues: NF-kappa-B inhibitor beta (359 aa).

Phosphoserine; by RPS6KA1 is present on residues serine 19 and serine 23. ANK repeat units lie at residues 57–86, 93–122, 126–155, 206–235, 240–269, and 273–302; these read DGDT…GTEY, LGQT…GVLV, GGHT…SHPR, DGHT…DLNK, CGRT…DPTA, and GGRT…PEPE. The tract at residues 153–192 is disordered; that stretch reads HPRDASDTYLTQSQDHTPDTSHAPVATDPQPNPGNEEELR. Over residues 298 to 308 the composition is skewed to basic and acidic residues; it reads APEPEDKDDKL. The tract at residues 298 to 359 is disordered; the sequence is APEPEDKDDK…KPLPDDPNPA (62 aa). Serine 318 is subject to Phosphoserine. A compositionally biased stretch (acidic residues) spans 318–331; the sequence is SDSDNRDEGDEYDD. The segment covering 342 to 359 has biased composition (pro residues); it reads QPPPSPAAKPLPDDPNPA.

It belongs to the NF-kappa-B inhibitor family. In terms of assembly, interacts with THRB (via ligand-binding domain). Interacts with RELA and REL. Interacts with COMMD1. Interacts with inhibitor kappa B-interacting Ras-like NKIRAS1 and NKIRAS2. Phosphorylated by RPS6KA1; followed by degradation. Interaction with NKIRAS1 and NKIRAS2 probably prevents phosphorylation.

It is found in the cytoplasm. It localises to the nucleus. Functionally, inhibits NF-kappa-B by complexing with and trapping it in the cytoplasm. However, the unphosphorylated form resynthesized after cell stimulation is able to bind NF-kappa-B allowing its transport to the nucleus and protecting it to further NFKBIA-dependent inactivation. Association with inhibitor kappa B-interacting NKIRAS1 and NKIRAS2 prevent its phosphorylation rendering it more resistant to degradation, explaining its slower degradation. This is NF-kappa-B inhibitor beta (Nfkbib) from Rattus norvegicus (Rat).